Reading from the N-terminus, the 204-residue chain is Elongation factor Ts (204 aa).

The involved in Mg(2+) ion dislocation from EF-Tu stretch occupies residues 80 to 83; that stretch reads TDFV.

Belongs to the EF-Ts family.

It is found in the cytoplasm. Associates with the EF-Tu.GDP complex and induces the exchange of GDP to GTP. It remains bound to the aminoacyl-tRNA.EF-Tu.GTP complex up to the GTP hydrolysis stage on the ribosome. In Caldicellulosiruptor bescii (strain ATCC BAA-1888 / DSM 6725 / KCTC 15123 / Z-1320) (Anaerocellum thermophilum), this protein is Elongation factor Ts.